The chain runs to 613 residues: Dihydroxy-acid dehydratase (613 aa).

D81 serves as a coordination point for Mg(2+). C122 lines the [2Fe-2S] cluster pocket. Positions 123 and 124 each coordinate Mg(2+). K124 carries the post-translational modification N6-carboxylysine. C193 serves as a coordination point for [2Fe-2S] cluster. Mg(2+) is bound at residue E489. The active-site Proton acceptor is S515.

It belongs to the IlvD/Edd family. As to quaternary structure, homodimer. [2Fe-2S] cluster serves as cofactor. The cofactor is Mg(2+).

It catalyses the reaction (2R)-2,3-dihydroxy-3-methylbutanoate = 3-methyl-2-oxobutanoate + H2O. The enzyme catalyses (2R,3R)-2,3-dihydroxy-3-methylpentanoate = (S)-3-methyl-2-oxopentanoate + H2O. Its pathway is amino-acid biosynthesis; L-isoleucine biosynthesis; L-isoleucine from 2-oxobutanoate: step 3/4. It participates in amino-acid biosynthesis; L-valine biosynthesis; L-valine from pyruvate: step 3/4. Its function is as follows. Functions in the biosynthesis of branched-chain amino acids. Catalyzes the dehydration of (2R,3R)-2,3-dihydroxy-3-methylpentanoate (2,3-dihydroxy-3-methylvalerate) into 2-oxo-3-methylpentanoate (2-oxo-3-methylvalerate) and of (2R)-2,3-dihydroxy-3-methylbutanoate (2,3-dihydroxyisovalerate) into 2-oxo-3-methylbutanoate (2-oxoisovalerate), the penultimate precursor to L-isoleucine and L-valine, respectively. This Pseudomonas putida (strain ATCC 47054 / DSM 6125 / CFBP 8728 / NCIMB 11950 / KT2440) protein is Dihydroxy-acid dehydratase.